Consider the following 86-residue polypeptide: Small ribosomal subunit protein bS20 (86 aa).

This sequence belongs to the bacterial ribosomal protein bS20 family.

Its function is as follows. Binds directly to 16S ribosomal RNA. The sequence is that of Small ribosomal subunit protein bS20 from Novosphingobium aromaticivorans (strain ATCC 700278 / DSM 12444 / CCUG 56034 / CIP 105152 / NBRC 16084 / F199).